The sequence spans 514 residues: 2-isopropylmalate synthase (514 aa).

Residues 5–267 form the Pyruvate carboxyltransferase domain; sequence VIIFDTTLRD…ETNIKHEEIH (263 aa). Mn(2+)-binding residues include Asp14, His202, His204, and Asn238. The regulatory domain stretch occupies residues 392–514; that stretch reads KLNYLSVQSG…AEIKERIATV (123 aa).

Belongs to the alpha-IPM synthase/homocitrate synthase family. LeuA type 1 subfamily. As to quaternary structure, homodimer. It depends on Mn(2+) as a cofactor.

It is found in the cytoplasm. It catalyses the reaction 3-methyl-2-oxobutanoate + acetyl-CoA + H2O = (2S)-2-isopropylmalate + CoA + H(+). The protein operates within amino-acid biosynthesis; L-leucine biosynthesis; L-leucine from 3-methyl-2-oxobutanoate: step 1/4. Functionally, catalyzes the condensation of the acetyl group of acetyl-CoA with 3-methyl-2-oxobutanoate (2-ketoisovalerate) to form 3-carboxy-3-hydroxy-4-methylpentanoate (2-isopropylmalate). In Photobacterium profundum (strain SS9), this protein is 2-isopropylmalate synthase.